A 372-amino-acid chain; its full sequence is Chaperone protein DnaJ (372 aa).

The J domain maps to aspartate 5–glycine 70. The CR-type zinc finger occupies glycine 134 to glutamate 212. Zn(2+)-binding residues include cysteine 147, cysteine 150, cysteine 164, cysteine 167, cysteine 186, cysteine 189, cysteine 200, and cysteine 203. CXXCXGXG motif repeat units lie at residues cysteine 147–glycine 154, cysteine 164–glycine 171, cysteine 186–glycine 193, and cysteine 200–glycine 207.

The protein belongs to the DnaJ family. As to quaternary structure, homodimer. It depends on Zn(2+) as a cofactor.

The protein resides in the cytoplasm. In terms of biological role, participates actively in the response to hyperosmotic and heat shock by preventing the aggregation of stress-denatured proteins and by disaggregating proteins, also in an autonomous, DnaK-independent fashion. Unfolded proteins bind initially to DnaJ; upon interaction with the DnaJ-bound protein, DnaK hydrolyzes its bound ATP, resulting in the formation of a stable complex. GrpE releases ADP from DnaK; ATP binding to DnaK triggers the release of the substrate protein, thus completing the reaction cycle. Several rounds of ATP-dependent interactions between DnaJ, DnaK and GrpE are required for fully efficient folding. Also involved, together with DnaK and GrpE, in the DNA replication of plasmids through activation of initiation proteins. This is Chaperone protein DnaJ from Wolbachia pipientis subsp. Culex pipiens (strain wPip).